Reading from the N-terminus, the 217-residue chain is Ras-like protein (217 aa).

A GTP-binding site is contributed by 17–24 (GGGGVGKS). Positions 39 to 47 (YDPTIEDSY) match the Effector region motif. GTP-binding positions include 64 to 68 (DTAGQ) and 123 to 126 (NKCD). The interval 181–200 (TGRMMTGGGGGGPPGTYAGK) is disordered. Positions 185–194 (MTGGGGGGPP) are enriched in gly residues. S-palmitoyl cysteine attachment occurs at residues Cys-210 and Cys-211. Cysteine methyl ester is present on Cys-214. The S-geranylgeranyl cysteine moiety is linked to residue Cys-214. A propeptide spans 215-217 (VVL) (removed in mature form).

The protein belongs to the small GTPase superfamily. Ras family.

It is found in the cell membrane. The enzyme catalyses GTP + H2O = GDP + phosphate + H(+). With respect to regulation, alternates between an inactive form bound to GDP and an active form bound to GTP. Activated by a guanine nucleotide-exchange factor (GEF) and inactivated by a GTPase-activating protein (GAP). The protein is Ras-like protein of Lentinula edodes (Shiitake mushroom).